The chain runs to 75 residues: Exodeoxyribonuclease 7 small subunit (75 aa).

This sequence belongs to the XseB family. Heterooligomer composed of large and small subunits.

The protein resides in the cytoplasm. The enzyme catalyses Exonucleolytic cleavage in either 5'- to 3'- or 3'- to 5'-direction to yield nucleoside 5'-phosphates.. Bidirectionally degrades single-stranded DNA into large acid-insoluble oligonucleotides, which are then degraded further into small acid-soluble oligonucleotides. In Caldanaerobacter subterraneus subsp. tengcongensis (strain DSM 15242 / JCM 11007 / NBRC 100824 / MB4) (Thermoanaerobacter tengcongensis), this protein is Exodeoxyribonuclease 7 small subunit.